A 315-amino-acid chain; its full sequence is Putative S-adenosyl-L-methionine-dependent methyltransferase MAV_4557 (315 aa).

S-adenosyl-L-methionine is bound by residues D134 and 163–164; that span reads DL.

This sequence belongs to the UPF0677 family.

Its function is as follows. Exhibits S-adenosyl-L-methionine-dependent methyltransferase activity. This is Putative S-adenosyl-L-methionine-dependent methyltransferase MAV_4557 from Mycobacterium avium (strain 104).